The following is a 273-amino-acid chain: Kit ligand (273 aa).

The N-terminal stretch at M1–T25 is a signal peptide. Q26 carries the post-translational modification Pyrrolidone carboxylic acid. Residues Q26–Q214 lie on the Extracellular side of the membrane. 2 cysteine pairs are disulfide-bonded: C29/C114 and C68/C163. An N-linked (GlcNAc...) asparagine; partial glycan is attached at N90. Residue N145 is glycosylated (N-linked (GlcNAc...) asparagine). S167 carries O-linked (GalNAc...) serine glycosylation. O-linked (GalNAc...) threonine glycans are attached at residues T168 and T180. The interval A190–P211 is disordered. Residues S191–R202 show a composition bias toward low complexity. A glycan (N-linked (GlcNAc...) asparagine) is linked at N195. Residues W215–W237 traverse the membrane as a helical segment. Residues K238 to V273 lie on the Cytoplasmic side of the membrane.

The protein belongs to the SCF family. Homodimer, non-covalently linked. Heterotetramer with KIT, binding two KIT molecules; thereby mediates KIT dimerization and subsequent activation by autophosphorylation. Post-translationally, a soluble form is produced by proteolytic processing of isoform 1 in the extracellular domain. In terms of processing, the identity of N- and O-linked saccharides is not reported in PubMed:1708771. The O-linked polysaccharides are probably the mucin type linked to GalNAc.

Its subcellular location is the cell membrane. The protein localises to the cytoplasm. It is found in the cytoskeleton. It localises to the cell projection. The protein resides in the lamellipodium. Its subcellular location is the filopodium. The protein localises to the secreted. Its function is as follows. Ligand for the receptor-type protein-tyrosine kinase KIT. Plays an essential role in the regulation of cell survival and proliferation, hematopoiesis, stem cell maintenance, gametogenesis, mast cell development, migration and function, and in melanogenesis. KITLG/SCF binding can activate several signaling pathways. Promotes phosphorylation of PIK3R1, the regulatory subunit of phosphatidylinositol 3-kinase, and subsequent activation of the kinase AKT1. KITLG/SCF and KIT also transmit signals via GRB2 and activation of RAS, RAF1 and the MAP kinases MAPK1/ERK2 and/or MAPK3/ERK1. KITLG/SCF and KIT promote activation of STAT family members STAT1, STAT3 and STAT5. KITLG/SCF and KIT promote activation of PLCG1, leading to the production of the cellular signaling molecules diacylglycerol and inositol 1,4,5-trisphosphate. KITLG/SCF acts synergistically with other cytokines, probably interleukins. This is Kit ligand (Kitlg) from Rattus norvegicus (Rat).